The following is a 166-amino-acid chain: UPF0179 protein Tneu_1978 (166 aa).

The disordered stretch occupies residues 140-166; sequence PPSPSKSGGATASRDPSRAPPSRPLSK. Over residues 157 to 166 the composition is skewed to pro residues; that stretch reads RAPPSRPLSK.

Belongs to the UPF0179 family.

The protein is UPF0179 protein Tneu_1978 of Pyrobaculum neutrophilum (strain DSM 2338 / JCM 9278 / NBRC 100436 / V24Sta) (Thermoproteus neutrophilus).